A 118-amino-acid polypeptide reads, in one-letter code: V-type proton ATPase subunit G 3 (118 aa).

A coiled-coil region spans residues 3–54 (SQSQGIQQLLQAEKRAKDKLEEAKKRKNKRLRQAKEEATADIDQYRLKREAD). Residues 19 to 39 (KDKLEEAKKRKNKRLRQAKEE) are disordered.

Belongs to the V-ATPase G subunit family. As to quaternary structure, V-ATPase is a heteromultimeric enzyme made up of two complexes: the ATP-hydrolytic V1 complex and the proton translocation V0 complex. The V1 complex consists of three catalytic AB heterodimers that form a heterohexamer, three peripheral stalks each consisting of EG heterodimers, one central rotor including subunits D and F, and the regulatory subunits C and H. The proton translocation complex V0 consists of the proton transport subunit a, a ring of proteolipid subunits c9c'', rotary subunit d, subunits e and f, and two accessory subunits.

Functionally, subunit of the V1 complex of vacuolar(H+)-ATPase (V-ATPase), a multisubunit enzyme composed of a peripheral complex (V1) that hydrolyzes ATP and a membrane integral complex (V0) that translocates protons. V-ATPase is responsible for acidifying and maintaining the pH of intracellular compartments and in some cell types, is targeted to the plasma membrane, where it is responsible for acidifying the extracellular environment. This chain is V-type proton ATPase subunit G 3 (atp6v1g3), found in Xenopus laevis (African clawed frog).